Consider the following 182-residue polypeptide: MAPLRVERAPGGSQLAVTSAQRPAALRLPPLLLLLLLLLLGAVSTSPESLNQSHPTEDSLLSKGKMEDYETNVLPCWYYYKTSMDSVKDWCNWTLISRYYSNLRYCLEYEADKFGLGFPNPLAESIILEAHLIHFANCSLVQPTFSDPPEDVLLAMIIAPICLIPFLVTLVVWRSKDGDAQA.

A signal peptide spans 1–45; sequence MAPLRVERAPGGSQLAVTSAQRPAALRLPPLLLLLLLLLLGAVST. Over 46-150 the chain is Extracellular; the sequence is SPESLNQSHP…VQPTFSDPPE (105 aa). N51, N92, and N137 each carry an N-linked (GlcNAc...) asparagine glycan. Disulfide bonds link C76–C106 and C91–C138. Residues 151–172 form a helical membrane-spanning segment; it reads DVLLAMIIAPICLIPFLVTLVV. At 173–182 the chain is on the cytoplasmic side; the sequence is WRSKDGDAQA.

The protein belongs to the RAMP family. Heterodimer of CALCRL and RAMP2; the interaction forms the receptor complex for adrenomedullin/ADM. Heterodimer of CALCR and RAMP2; interaction forms the AMYR2 receptor complex for calcitonin/CALC and amylin/IAPP.

It is found in the cell membrane. Functionally, accessory protein that interacts with and modulates the function of G-protein coupled receptors including calcitonin gene-related peptide type 1 receptor (CALCRL) and calcitonin receptor (CALCR). Required for the transport of CALCRL to the plasma membrane. Together with CALCRL, form a receptor complex for adrenomedullin/ADM. Together with CALCR, act as a receptor complex for calcitonin/CT/CALC. Together with CALCR, also act as a receptor complex for amylin/IAPP. This Rattus norvegicus (Rat) protein is Receptor activity-modifying protein 2.